A 175-amino-acid chain; its full sequence is B9 domain-containing protein 2 (175 aa).

Residues 2–118 (AEVHVIGQIM…DCPTWRPLGS (117 aa)) form the C2 B9-type domain.

It belongs to the B9D family. In terms of assembly, part of the tectonic-like complex (also named B9 complex). Interacts with TUBG1.

The protein resides in the cytoplasm. It is found in the cytoskeleton. It localises to the cilium basal body. The protein localises to the cilium axoneme. Its subcellular location is the nucleus. Its function is as follows. Component of the tectonic-like complex, a complex localized at the transition zone of primary cilia and acting as a barrier that prevents diffusion of transmembrane proteins between the cilia and plasma membranes. The polypeptide is B9 domain-containing protein 2 (B9D2) (Bos taurus (Bovine)).